We begin with the raw amino-acid sequence, 20 residues long: Thylakoid lumenal 18.4 kDa protein (20 aa).

It localises to the plastid. The protein resides in the chloroplast thylakoid lumen. This chain is Thylakoid lumenal 18.4 kDa protein, found in Spinacia oleracea (Spinach).